The following is a 301-amino-acid chain: Probable alpha-L-glutamate ligase (301 aa).

One can recognise an ATP-grasp domain in the interval Leu-104–Glu-287. ATP is bound by residues Lys-141, Glu-178 to Phe-179, Asp-187, and Arg-211 to Asn-213. The Mg(2+) site is built by Asp-248, Glu-260, and Asn-262. Positions 248, 260, and 262 each coordinate Mn(2+).

This sequence belongs to the RimK family. Requires Mg(2+) as cofactor. Mn(2+) serves as cofactor.

This is Probable alpha-L-glutamate ligase from Shewanella loihica (strain ATCC BAA-1088 / PV-4).